The sequence spans 980 residues: Phosphoenolpyruvate carboxylase (980 aa).

Catalysis depends on residues His-182 and Lys-625.

Belongs to the PEPCase type 1 family. Mg(2+) serves as cofactor.

It catalyses the reaction oxaloacetate + phosphate = phosphoenolpyruvate + hydrogencarbonate. Its function is as follows. Forms oxaloacetate, a four-carbon dicarboxylic acid source for the tricarboxylic acid cycle. The sequence is that of Phosphoenolpyruvate carboxylase from Bordetella pertussis (strain Tohama I / ATCC BAA-589 / NCTC 13251).